A 248-amino-acid chain; its full sequence is Transcriptional activator protein FnrL (248 aa).

The HTH crp-type domain occupies 154-232; it reads KTAREKIASL…KRHVIVTDFA (79 aa). A DNA-binding region (H-T-H motif) is located at residues 191 to 210; sequence REEMADYLGLTLETVSRQVS.

Its function is as follows. Anaerobic regulatory protein; transcriptional activator of hemA. Appears to regulate other genes. In Cereibacter sphaeroides (strain ATCC 17023 / DSM 158 / JCM 6121 / CCUG 31486 / LMG 2827 / NBRC 12203 / NCIMB 8253 / ATH 2.4.1.) (Rhodobacter sphaeroides), this protein is Transcriptional activator protein FnrL (fnrL).